The primary structure comprises 96 residues: Large ribosomal subunit protein uL23 (96 aa).

It belongs to the universal ribosomal protein uL23 family. In terms of assembly, part of the 50S ribosomal subunit. Contacts protein L29, and trigger factor when it is bound to the ribosome.

Its function is as follows. One of the early assembly proteins it binds 23S rRNA. One of the proteins that surrounds the polypeptide exit tunnel on the outside of the ribosome. Forms the main docking site for trigger factor binding to the ribosome. The polypeptide is Large ribosomal subunit protein uL23 (Oleidesulfovibrio alaskensis (strain ATCC BAA-1058 / DSM 17464 / G20) (Desulfovibrio alaskensis)).